A 279-amino-acid chain; its full sequence is Large ribosomal subunit protein uL2 (279 aa).

Basic residues-rich tracts occupy residues 211–221 and 256–279; these read GRSRWRGKTPH and SYGK…RKGK. Residues 211–279 are disordered; that stretch reads GRSRWRGKTP…KFIVRGRKGK (69 aa).

The protein belongs to the universal ribosomal protein uL2 family. As to quaternary structure, part of the 50S ribosomal subunit. Forms a bridge to the 30S subunit in the 70S ribosome.

One of the primary rRNA binding proteins. Required for association of the 30S and 50S subunits to form the 70S ribosome, for tRNA binding and peptide bond formation. It has been suggested to have peptidyltransferase activity; this is somewhat controversial. Makes several contacts with the 16S rRNA in the 70S ribosome. This Oenococcus oeni (strain ATCC BAA-331 / PSU-1) protein is Large ribosomal subunit protein uL2.